The following is a 282-amino-acid chain: Elongation factor Ts (282 aa).

The segment at 80 to 83 (TDFV) is involved in Mg(2+) ion dislocation from EF-Tu.

This sequence belongs to the EF-Ts family.

The protein resides in the cytoplasm. Functionally, associates with the EF-Tu.GDP complex and induces the exchange of GDP to GTP. It remains bound to the aminoacyl-tRNA.EF-Tu.GTP complex up to the GTP hydrolysis stage on the ribosome. The polypeptide is Elongation factor Ts (Chlamydia trachomatis serovar A (strain ATCC VR-571B / DSM 19440 / HAR-13)).